The chain runs to 89 residues: Small ribosomal subunit protein uS19 (89 aa).

This sequence belongs to the universal ribosomal protein uS19 family.

Protein S19 forms a complex with S13 that binds strongly to the 16S ribosomal RNA. The protein is Small ribosomal subunit protein uS19 of Stenotrophomonas maltophilia (strain R551-3).